A 257-amino-acid chain; its full sequence is 1-(5-phosphoribosyl)-5-[(5-phosphoribosylamino)methylideneamino] imidazole-4-carboxamide isomerase (257 aa).

Residue Asp-8 is the Proton acceptor of the active site. The active-site Proton donor is Asp-131.

The protein belongs to the HisA/HisF family.

The protein resides in the cytoplasm. The catalysed reaction is 1-(5-phospho-beta-D-ribosyl)-5-[(5-phospho-beta-D-ribosylamino)methylideneamino]imidazole-4-carboxamide = 5-[(5-phospho-1-deoxy-D-ribulos-1-ylimino)methylamino]-1-(5-phospho-beta-D-ribosyl)imidazole-4-carboxamide. It participates in amino-acid biosynthesis; L-histidine biosynthesis; L-histidine from 5-phospho-alpha-D-ribose 1-diphosphate: step 4/9. This chain is 1-(5-phosphoribosyl)-5-[(5-phosphoribosylamino)methylideneamino] imidazole-4-carboxamide isomerase, found in Nitrosospira multiformis (strain ATCC 25196 / NCIMB 11849 / C 71).